We begin with the raw amino-acid sequence, 359 residues long: MNIYDQLQAVEDRYEELGELLSDPDVVSDTKRFMELSKEEASNRDTVIAYREYKQVLQNIVDAEEMIKESGGDADLEEMAKQELKDAKAEKEEYEEKLKILLLPKDPNDDKNIILEIRGAAGGDEAALFAGDLLTMYQKYAEAQGWRFEVMEASMNGVGGFKEVVAMVSGQSVYSKLKYESGAHRVQRVPVTESQGRVHTSTATVLVMPEVEEVEYDIDPKDLRVDIYHASGAGGQNVNKVATAVRIVHLPTNIKVEMQEERTQQKNREKAMKIIRARVADHFAQIAQDEQDAERKSTIGTGDRSERIRTYNFPQNRVTDHRIGLTLQKLDTILSGKLDEVVDALVLYDQTQKLEELNK.

Q236 carries the N5-methylglutamine modification.

This sequence belongs to the prokaryotic/mitochondrial release factor family. Post-translationally, methylated by PrmC. Methylation increases the termination efficiency of RF1.

It localises to the cytoplasm. Functionally, peptide chain release factor 1 directs the termination of translation in response to the peptide chain termination codons UAG and UAA. The polypeptide is Peptide chain release factor 1 (Streptococcus pneumoniae serotype 2 (strain D39 / NCTC 7466)).